The following is a 1255-amino-acid chain: Mucin-1 (1255 aa).

A signal peptide spans 1–23 (MTPGTQSPFFLLLLLTVLTVVTG). The interval 23–1033 (GSGHASSTPG…PLTSSNHSTS (1011 aa)) is disordered. Residues 24–1158 (SGHASSTPGG…SAQSGAGVPG (1135 aa)) lie on the Extracellular side of the membrane. Over residues 38–54 (SATQRSSVPSSTEKNAV) the composition is skewed to polar residues. Residues 55–75 (SMTSSVLSSHSPGSGSSTTQG) show a composition bias toward low complexity. A 1; approximate repeat occupies 61–80 (LSSHSPGSGSSTTQGQDVTL). Residues 81 to 100 (APATEPASGSAATWGQDVTS) form a 2; approximate repeat. The segment covering 90-102 (SAATWGQDVTSVP) has biased composition (polar residues). 43 repeat units span residues 101–120 (VPVTRPALGSTTPPAHDVTS), 121–140 (APDNKPAPGSTAPPAHGVTS), 141–160 (APDTRPAPGSTAPPAHGVTS), 161–180 (APDTRPAPGSTAPPAHGVTS), 181–200 (APDTRPAPGSTAPPAHGVTS), 201–220 (APDTRPAPGSTAPPAHGVTS), 221–240 (APDTRPAPGSTAPPAHGVTS), 241–260 (APDTRPAPGSTAPPAHGVTS), 261–280 (APDTRPAPGSTAPPAHGVTS), 281–300 (APDTRPAPGSTAPPAHGVTS), 301–320 (APDTRPAPGSTAPPAHGVTS), 321–340 (APDTRPAPGSTAPPAHGVTS), 341–360 (APDTRPAPGSTAPPAHGVTS), 361–380 (APDTRPAPGSTAPPAHGVTS), 381–400 (APDTRPAPGSTAPPAHGVTS), 401–420 (APDTRPAPGSTAPPAHGVTS), 421–440 (APDTRPAPGSTAPPAHGVTS), 441–460 (APDTRPAPGSTAPPAHGVTS), 461–480 (APDTRPAPGSTAPPAHGVTS), 481–500 (APDTRPAPGSTAPPAHGVTS), 501–520 (APDTRPAPGSTAPPAHGVTS), 521–540 (APDTRPAPGSTAPPAHGVTS), 541–560 (APDTRPAPGSTAPPAHGVTS), 561–580 (APDTRPAPGSTAPPAHGVTS), 581–600 (APDTRPAPGSTAPPAHGVTS), 601–620 (APDTRPAPGSTAPPAHGVTS), 621–640 (APDTRPAPGSTAPPAHGVTS), 641–660 (APDTRPAPGSTAPPAHGVTS), 661–680 (APDTRPAPGSTAPPAHGVTS), 681–700 (APDTRPAPGSTAPPAHGVTS), 701–720 (APDTRPAPGSTAPPAHGVTS), 721–740 (APDTRPAPGSTAPPAHGVTS), 741–760 (APDTRPAPGSTAPPAHGVTS), 761–780 (APDTRPAPGSTAPPAHGVTS), 781–800 (APDTRPAPGSTAPPAHGVTS), 801–820 (APDTRPAPGSTAPPAHGVTS), 821–840 (APDTRPAPGSTAPPAHGVTS), 841–860 (APDTRPAPGSTAPPAHGVTS), 861–880 (APDTRPAPGSTAPPAHGVTS), 881–900 (APDTRPAPGSTAPPAHGVTS), 901–920 (APDTRPAPGSTAPPAHGVTS), 921–940 (APDTRPAPGSTAPPAHGVTS), and 941–960 (APDNRPALGSTAPPVHNVTS). A 42 X 20 AA approximate tandem repeats of P-A-P-G-S-T-A-P-P-A-H-G-V-T-S-A-P-D-T-R region spans residues 126–965 (PAPGSTAPPA…HNVTSASGSA (840 aa)). Residues Thr-131 and Thr-139 are each glycosylated (O-linked (GalNAc...) threonine). An O-linked (GalNAc...) serine glycan is attached at Ser-140. O-linked (GalNAc...) threonine glycosylation is present at Thr-144. Asn-957 carries an N-linked (GlcNAc...) asparagine glycan. A compositionally biased stretch (low complexity) spans 960–970 (SASGSASGSAS). The stretch at 961 to 980 (ASGSASGSASTLVHNGTSAR) is one 46; approximate repeat. Composition is skewed to polar residues over residues 971 to 993 (TLVHNGTSARATTTPASKSTPFS) and 1001 to 1033 (TPTTLASHSTKTDASSTHHSSVPPLTSSNHSTS). Asn-975 is a glycosylation site (N-linked (GlcNAc...) asparagine). The stretch at 981–1000 (ATTTPASKSTPFSIPSHHSD) is one 47; approximate repeat. One copy of the 48; approximate repeat lies at 1001–1020 (TPTTLASHSTKTDASSTHHS). N-linked (GlcNAc...) asparagine glycosylation is found at Asn-1029, Asn-1055, and Asn-1133. The SEA domain maps to 1039-1148 (GVSFFFLSFH…VSVSDVPFPF (110 aa)). A helical membrane pass occupies residues 1159–1181 (WGIALLVLVCVLVALAIVYLIAL). Over 1182-1255 (AVCQCRRKNY…PAVAATSANL (74 aa)) the chain is Cytoplasmic. 2 S-palmitoyl cysteine lipidation sites follow: Cys-1184 and Cys-1186. An interaction with P53 region spans residues 1192–1228 (GQLDIFPARDTYHPMSEYPTYHTHGRYVPPSSTDRSP). Tyr-1203 is modified (phosphotyrosine; by PDGFR). The Interaction with GRB2 motif lies at 1203–1206 (YHPM). Tyr-1212 is modified (phosphotyrosine). The tract at residues 1214–1237 (THGRYVPPSSTDRSPYEKVSAGNG) is disordered. Phosphotyrosine; by PDGFR is present on Tyr-1218. Residues 1223–1230 (STDRSPYE) form a required for interaction with GSK3B region. Thr-1224 bears the Phosphothreonine; by PKC/PRKCD mark. Ser-1227 bears the Phosphoserine; by GSK3-beta mark. Tyr-1229 is subject to Phosphotyrosine; by CSK, EGFR and SRC. The Interaction with SRC and ESR1 signature appears at 1229-1232 (YEKV). Residues 1233–1241 (SAGNGGSSL) form a required for interaction with beta- and gamma-catenins region. The residue at position 1243 (Tyr-1243) is a Phosphotyrosine. Residues 1243–1246 (YTNP) carry the Required for interaction with AP1S2 motif.

The alpha subunit forms a tight, non-covalent heterodimeric complex with the proteolytically-released beta-subunit. Interaction, via the tandem repeat region, with domain 1 of ICAM1 is implicated in cell migration and metastases. Isoform 1 binds directly the SH2 domain of GRB2, and forms a MUC1/GRB2/SOS1 complex involved in RAS signaling. The cytoplasmic tail (MUC1CT) interacts with several proteins such as SRC, CTNNB1 and ERBs. Interaction with the SH2 domain of CSK decreases interaction with GSK3B. Interacts with CTNNB1/beta-catenin and JUP/gamma-catenin and promotes cell adhesion. Interaction with JUP/gamma-catenin is induced by heregulin. Binds PRKCD, ERBB2, ERBB3 and ERBB4. Heregulin (HRG) stimulates the interaction with ERBB2 and, to a much lesser extent, the interaction with ERBB3 and ERBB4. Interacts with P53 in response to DNA damage. Interacts with KLF4. Interacts with estrogen receptor alpha/ESR1, through its DNA-binding domain, and stimulates its transcription activity. Binds ADAM17. Isoform ZD forms disulfide-linked oligomers. Post-translationally, highly glycosylated (N- and O-linked carbohydrates and sialic acid). O-glycosylated to a varying degree on serine and threonine residues within each tandem repeat, ranging from mono- to penta-glycosylation. The average density ranges from about 50% in human milk to over 90% in T47D breast cancer cells. Further sialylation occurs during recycling. Membrane-shed glycoproteins from kidney and breast cancer cells have preferentially sialyated core 1 structures, while secreted forms from the same tissues display mainly core 2 structures. The O-glycosylated content is overlapping in both these tissues with terminal fucose and galactose, 2- and 3-linked galactose, 3- and 3,6-linked GalNAc-ol and 4-linked GlcNAc predominating. Differentially O-glycosylated in breast carcinomas with 3,4-linked GlcNAc. N-glycosylation consists of high-mannose, acidic complex-type and hybrid glycans in the secreted form MUC1/SEC, and neutral complex-type in the transmembrane form, MUC1/TM. In terms of processing, proteolytic cleavage in the SEA domain occurs in the endoplasmic reticulum by an autoproteolytic mechanism and requires the full-length SEA domain as well as requiring a Ser, Thr or Cys residue at the P + 1 site. Cleavage at this site also occurs on isoform MUC1/X but not on isoform MUC1/Y. Ectodomain shedding is mediated by ADAM17. Dual palmitoylation on cysteine residues in the CQC motif is required for recycling from endosomes back to the plasma membrane. Post-translationally, phosphorylated on tyrosines and serine residues in the C-terminal. Phosphorylation on tyrosines in the C-terminal increases the nuclear location of MUC1 and beta-catenin. Phosphorylation by PKC delta induces binding of MUC1 to beta-catenin/CTNNB1 and thus decreases the formation of the beta-catenin/E-cadherin complex. Src-mediated phosphorylation inhibits interaction with GSK3B. Src- and EGFR-mediated phosphorylation on Tyr-1229 increases binding to beta-catenin/CTNNB1. GSK3B-mediated phosphorylation on Ser-1227 decreases this interaction but restores the formation of the beta-cadherin/E-cadherin complex. On T-cell receptor activation, phosphorylated by LCK. PDGFR-mediated phosphorylation increases nuclear colocalization of MUC1CT and CTNNB1. In terms of processing, the N-terminal sequence has been shown to begin at position 24 or 28. Expressed on the apical surface of epithelial cells, especially of airway passages, breast and uterus. Also expressed in activated and unactivated T-cells. Overexpressed in epithelial tumors, such as breast or ovarian cancer and also in non-epithelial tumor cells. Isoform Y is expressed in tumor cells only.

The protein resides in the apical cell membrane. It is found in the secreted. The protein localises to the cell membrane. It localises to the cytoplasm. Its subcellular location is the nucleus. Its function is as follows. The alpha subunit has cell adhesive properties. Can act both as an adhesion and an anti-adhesion protein. May provide a protective layer on epithelial cells against bacterial and enzyme attack. In terms of biological role, the beta subunit contains a C-terminal domain which is involved in cell signaling, through phosphorylations and protein-protein interactions. Modulates signaling in ERK, SRC and NF-kappa-B pathways. In activated T-cells, influences directly or indirectly the Ras/MAPK pathway. Promotes tumor progression. Regulates TP53-mediated transcription and determines cell fate in the genotoxic stress response. Binds, together with KLF4, the PE21 promoter element of TP53 and represses TP53 activity. This is Mucin-1 (MUC1) from Homo sapiens (Human).